Here is a 529-residue protein sequence, read N- to C-terminus: Low affinity inorganic phosphate transporter 5 (529 aa).

The Cytoplasmic portion of the chain corresponds to 1–21 (MASNNLNVLNALDTAHTQWYH). Residues 22–42 (VTAVVIAGMGFFTDAYDLFCI) form a helical membrane-spanning segment. Residues 43 to 71 (STISKLLGRLYYYDPHTHAPGKLPHTVNN) are Extracellular-facing. A helical transmembrane segment spans residues 72–92 (WVTGVALVGTLTGQLVFGWLG). Residues 93–99 (DKLGRKK) lie on the Cytoplasmic side of the membrane. A helical membrane pass occupies residues 100–120 (VYGLTLILMVICALSSGLSFG). The Extracellular portion of the chain corresponds to 121 to 124 (YSRK). Residues 125–145 (VVIGTLCFFRFWLGFGIGGDY) form a helical membrane-spanning segment. Residues 146-163 (PLSATIMSEYANKRTRGA) lie on the Cytoplasmic side of the membrane. Residues 164–184 (FIAAVFAMQGVGIIFAGLVLM) form a helical membrane-spanning segment. Residues 185 to 211 (TVSKVFLMRYAGKAFSTDEVFSTEPEA) are Extracellular-facing. A helical transmembrane segment spans residues 212-232 (DYVWRIVLMLGALPALLTYYW). The Cytoplasmic segment spans residues 233 to 291 (RMKMPETGRYTAIIEGNAKQAAIDMGKVLEIEIQAEGEKLAKFKSANDYSLLSNEFFQR). The chain crosses the membrane as a helical span at residues 292-312 (HGLHLIGTMSTWFLLDIAFYS). Topologically, residues 313-344 (QNLTQKDIFPTMGLVSDAKSISALREMFETSR) are extracellular. Residue Asn-314 is glycosylated (N-linked (GlcNAc...) asparagine). A helical membrane pass occupies residues 345 to 365 (AMFVIALLGTFPGYWFTVFFI). The Cytoplasmic portion of the chain corresponds to 366 to 374 (EKIGRFKIQ). The helical transmembrane segment at 375–395 (LMGFFMMSIFMAIIGVRYDYL) threads the bilayer. At 396–405 (KTKDHKWTFA) the chain is on the extracellular side. Residues 406–426 (ALYGLTFFFANSGPNSTTFVL) traverse the membrane as a helical segment. Over 427–472 (PAELFPTRVRSTCHALSAASGKAGAMVSAFGVQQYTQDGEVHKIKK) the chain is Cytoplasmic. The helical transmembrane segment at 473–493 (AMLFLAFTNMVGFCCTFLVTE) threads the bilayer. At 494–529 (TKGRSLEEISGEDENQNETKMKGRPVSGGHQDDGWD) the chain is on the extracellular side. Residues 500–529 (EEISGEDENQNETKMKGRPVSGGHQDDGWD) are disordered. Asn-510 carries an N-linked (GlcNAc...) asparagine glycan.

The protein belongs to the major facilitator superfamily. Phosphate:H(+) symporter (TC 2.A.1.9) family. In terms of tissue distribution, expressed at low levels in non-mycorrhized roots.

The protein resides in the cell membrane. The enzyme catalyses phosphate(in) + H(+)(in) = phosphate(out) + H(+)(out). Functionally, low-affinity transporter for external inorganic phosphate (Pi) probably involved in the acquisition of phosphate released by arbuscular mycorrhizal (AM) fungi during AM symbiosis. This chain is Low affinity inorganic phosphate transporter 5, found in Petunia hybrida (Petunia).